The following is a 1003-amino-acid chain: Translation initiation factor IF-2 (1003 aa).

The segment at 36–392 (SSTIEPPVVK…RQKRNEYESM (357 aa)) is disordered. The segment covering 62-151 (AAKPAAAKPA…PKPAAAAKPA (90 aa)) has biased composition (low complexity). Pro residues-rich tracts occupy residues 178–190 (DGMP…PAPK) and 213–230 (PRPG…PGGG). 2 stretches are compositionally biased toward gly residues: residues 231–243 (PRPQ…GGQR) and 255–271 (GNRG…GPRP). The segment covering 273 to 286 (GGPRPQGGSRPQGG) has biased composition (low complexity). Gly residues predominate over residues 329–372 (GKGGRGGQAGGGAGGGFNRGGGTGGGAGRGGRRGGTAGAFGRPG). Positions 376 to 385 (RRGRKSKRQK) are enriched in basic residues. Positions 498–670 (KRPPVVTVMG…VCLTADAELD (173 aa)) constitute a tr-type G domain. The G1 stretch occupies residues 507-514 (GHVDHGKT). 507–514 (GHVDHGKT) lines the GTP pocket. The segment at 532–536 (GITQG) is G2. The segment at 557 to 560 (DTPG) is G3. Residues 557–561 (DTPGH) and 611–614 (NKID) contribute to the GTP site. The segment at 611–614 (NKID) is G4. The segment at 647-649 (SAK) is G5.

This sequence belongs to the TRAFAC class translation factor GTPase superfamily. Classic translation factor GTPase family. IF-2 subfamily.

It localises to the cytoplasm. In terms of biological role, one of the essential components for the initiation of protein synthesis. Protects formylmethionyl-tRNA from spontaneous hydrolysis and promotes its binding to the 30S ribosomal subunits. Also involved in the hydrolysis of GTP during the formation of the 70S ribosomal complex. In Corynebacterium glutamicum (strain R), this protein is Translation initiation factor IF-2.